We begin with the raw amino-acid sequence, 155 residues long: Probable calcium-binding protein CML9 (155 aa).

3 EF-hand domains span residues 8-43 (EQVD…LGQN), 86-121 (ATEK…HGDR), and 122-155 (LTEE…MNNK). D21, D23, D25, R27, and E32 together coordinate Ca(2+).

Functionally, potential calcium sensor. This is Probable calcium-binding protein CML9 (CML9) from Oryza sativa subsp. japonica (Rice).